Reading from the N-terminus, the 568-residue chain is Sesquiterpene synthase 14 (568 aa).

Mg(2+) contacts are provided by Asp319, Asp323, Asp463, and Glu471. The short motif at 319 to 323 (DDLYD) is the DDXXD motif element.

The protein belongs to the terpene synthase family. Tpsa subfamily. It depends on Mg(2+) as a cofactor. Mn(2+) serves as cofactor. In terms of tissue distribution, mostly expressed in roots, to a lower extent in flowers and, at low levels, in fruits.

The enzyme catalyses (2Z,6Z)-farnesyl diphosphate = (E)-alpha-bisabolene + diphosphate. It catalyses the reaction (2Z,6Z)-farnesyl diphosphate = beta-bisabolene + diphosphate. The catalysed reaction is (2E,6E)-farnesyl diphosphate = beta-bisabolene + diphosphate. It carries out the reaction (2E,6E)-farnesyl diphosphate = (Z)-gamma-bisabolene + diphosphate. The enzyme catalyses (2E,6E)-farnesyl diphosphate = (E)-gamma-bisabolene + diphosphate. It catalyses the reaction (2Z,6Z)-farnesyl diphosphate = (E)-gamma-bisabolene + diphosphate. It participates in secondary metabolite biosynthesis; terpenoid biosynthesis. Sesquiterpene synthase involved in the biosynthesis of volatile compounds. Mediates the conversion of (2E,6E)-farnesyl diphosphate ((EE)-FPP) into beta-bisabolene, and of (2Z,6Z)-farnesyl diphosphate ((ZZ)-FPP) into alpha-bisabolene, but also smaller amounts of (Z)-gamma-bisabolene, (E)-gamma-bisabolene and nerolidol. This Solanum lycopersicum (Tomato) protein is Sesquiterpene synthase 14.